The sequence spans 107 residues: MIDVEVVFALPETATSLTIEVVKGTTVEQAVIQSGIIEKHPEIDATALTLGVWNRTVKPNQELKEGDRIEIYRPLIADPKDARRKRAEKAKEEGRANKVTGGRPIER.

Positions 82–107 are disordered; that stretch reads ARRKRAEKAKEEGRANKVTGGRPIER.

The protein belongs to the UPF0125 (RnfH) family.

The polypeptide is Protein RnfH (Pseudoalteromonas translucida (strain TAC 125)).